The chain runs to 448 residues: Nucleoprotein (448 aa).

Positions 1-55 (MSFTPGKQSSSRASSGNRSGNGILKWADQSDQVRNVQTRGRRAQPKQTATSQQPS) are disordered. Positions 9 to 22 (SSSRASSGNRSGNG) are enriched in low complexity. Composition is skewed to polar residues over residues 29 to 38 (QSDQVRNVQT) and 45 to 55 (PKQTATSQQPS). The interval 52–194 (QQPSGGNVVP…GYYIEGSGRS (143 aa)) is RNA-binding. In terms of domain architecture, CoV N NTD spans 61–190 (PYYSWFSGIT…VLPQGYYIEG (130 aa)). Residues Arg-106, Arg-122, and Arg-164 each coordinate RNA. Disordered regions lie at residues 158–231 (PADI…VTPD), 266–293 (ILNKPRQKRSPNKQCTVQQCFGKRGPNQ), and 385–448 (GMMN…TSEI). A Phosphoserine; by host modification is found at Ser-167. Thr-174 bears the Phosphothreonine; by host mark. Position 191 is a phosphoserine; by host (Ser-191). Low complexity predominate over residues 193-223 (RSAPNSRSTSRTSSRASSAGSRSRANSGNRT). In terms of domain architecture, CoV N CTD spans 259 to 384 (AKEVRQKILN…ENLNAYQQQD (126 aa)). Residues 266–276 (ILNKPRQKRSP) show a composition bias toward basic residues. Residues 266-384 (ILNKPRQKRS…ENLNAYQQQD (119 aa)) are dimerization. Phosphoserine; by host is present on residues Ser-390 and Ser-423. Basic and acidic residues predominate over residues 422 to 439 (KSRELTAEDISLLKKMDE). The residue at position 427 (Thr-427) is a Phosphothreonine; by host.

It belongs to the betacoronavirus nucleocapsid protein family. In terms of assembly, homooligomer. Both monomeric and oligomeric forms interact with RNA. Interacts with protein M. Interacts with NSP3; this interaction serves to tether the genome to the newly translated replicase-transcriptase complex at a very early stage of infection. ADP-ribosylated. The ADP-ribosylation is retained in the virion during infection. Post-translationally, phosphorylated on serine and threonine residues. In terms of processing, proteolytically cleaved by host CASP6. The cleavage leads to two fragments and facilitates viral replication by inhibiting host IFN signaling. The two fragments may interact with IRF3 inhibiting its nuclear translocation after activation and reduce the expression of IFNB and IFN-stimulated genes.

It is found in the virion. Its subcellular location is the host endoplasmic reticulum-Golgi intermediate compartment. The protein resides in the host Golgi apparatus. Its function is as follows. Packages the positive strand viral genome RNA into a helical ribonucleocapsid (RNP) and plays a fundamental role during virion assembly through its interactions with the viral genome and membrane protein M. Plays an important role in enhancing the efficiency of subgenomic viral RNA transcription as well as viral replication. Attenuates the stress granules formation by reducing host G3BP1 access to host mRNAs under stress conditions. The protein is Nucleoprotein of Homo sapiens (Human).